We begin with the raw amino-acid sequence, 491 residues long: Probable malate:quinone oxidoreductase (491 aa).

The protein belongs to the MQO family. FAD is required as a cofactor.

The catalysed reaction is (S)-malate + a quinone = a quinol + oxaloacetate. It functions in the pathway carbohydrate metabolism; tricarboxylic acid cycle; oxaloacetate from (S)-malate (quinone route): step 1/1. The polypeptide is Probable malate:quinone oxidoreductase (Actinobacillus pleuropneumoniae serotype 5b (strain L20)).